The sequence spans 324 residues: Protoheme IX farnesyltransferase 2 (324 aa).

9 helical membrane passes run 39–59 (LIKP…MLLA), 63–83 (IPSP…AGSA), 115–135 (HALV…WATT), 137–157 (LLSA…YTLV), 166–186 (IVWG…GVTG), 192–212 (ALVM…SLAM), 239–259 (IVVF…ATGW), 260–280 (LYTA…HRLH), and 302–322 (LMIV…VLGW).

Belongs to the UbiA prenyltransferase family. Protoheme IX farnesyltransferase subfamily.

Its subcellular location is the cell membrane. It carries out the reaction heme b + (2E,6E)-farnesyl diphosphate + H2O = Fe(II)-heme o + diphosphate. It participates in porphyrin-containing compound metabolism; heme O biosynthesis; heme O from protoheme: step 1/1. In terms of biological role, converts heme B (protoheme IX) to heme O by substitution of the vinyl group on carbon 2 of heme B porphyrin ring with a hydroxyethyl farnesyl side group. The protein is Protoheme IX farnesyltransferase 2 of Saccharopolyspora erythraea (strain ATCC 11635 / DSM 40517 / JCM 4748 / NBRC 13426 / NCIMB 8594 / NRRL 2338).